Consider the following 1284-residue polypeptide: 1,6-alpha-glucosyltransferase (1284 aa).

Positions Met-1–Ala-35 are cleaved as a signal peptide. The Nucleophile role is filled by Asp-433. The active site involves Asp-436. Catalysis depends on Asp-495, which acts as the Proton donor. CBM6 domains are found at residues Ser-856–Pro-988 and Gly-994–Ser-1120.

The protein belongs to the glycosyl hydrolase 31 family.

It is found in the secreted. It carries out the reaction 2 D-maltotetraose = alpha-isomaltosyl-(1-&gt;4)-D-maltotriose + D-maltotriose. It catalyses the reaction Transfers an alpha-D-glucosyl residue in a (1-&gt;4)-alpha-D-glucan to the primary hydroxy group of glucose, free or combined in a (1-&gt;4)-alpha-D-glucan.. Its activity is regulated as follows. Strongly activated and stabilized by various divalent cations. Strongly inhibited by Cu(2+), Hg(2+) and EDTA, and moderately inhibited by Tris. Glycosyltransferase involved, together with CtsY, in the conversion of alpha-1,4-glucan into a cyclic tetrasaccharide (CTS) constructed from four alpha-glucopyranosyl residues. Catalyzes an intermolecular transglucosylation in which a glucose residue at the non-reducing end of maltotetraose is transferred to the 6-OH of an other non-reducing glucose, leading to the formation of alpha-isomaltosyl-(1-&gt;4)-D-maltotriose. Has a wide substrate specificity, and acts on oligosaccharides with alpha-1,4-glucosidic linkages at the non-reducing end, except for maltose. In contrast, has little activity toward oligosaccharides with alpha-1,6-glucosidic linkages at the non-reducing end. The sequence is that of 1,6-alpha-glucosyltransferase from Sporosarcina globispora (Bacillus globisporus).